Reading from the N-terminus, the 341-residue chain is L-threonine 3-dehydrogenase (341 aa).

C38 contributes to the Zn(2+) binding site. Residues T40 and H43 each act as charge relay system in the active site. Zn(2+)-binding residues include H63, E64, C93, C96, C99, and C107. NAD(+) is bound by residues I175, D195, R200, 262–264, and 286–287; these read LGI and IY.

This sequence belongs to the zinc-containing alcohol dehydrogenase family. Homotetramer. Zn(2+) is required as a cofactor.

It is found in the cytoplasm. It catalyses the reaction L-threonine + NAD(+) = (2S)-2-amino-3-oxobutanoate + NADH + H(+). The protein operates within amino-acid degradation; L-threonine degradation via oxydo-reductase pathway; glycine from L-threonine: step 1/2. In terms of biological role, catalyzes the NAD(+)-dependent oxidation of L-threonine to 2-amino-3-ketobutyrate. The protein is L-threonine 3-dehydrogenase of Shewanella sp. (strain ANA-3).